Consider the following 360-residue polypeptide: Chorismate synthase (360 aa).

R48 and R54 together coordinate NADP(+). FMN contacts are provided by residues 125–127 (RSS), 246–247 (NA), G286, 301–305 (KPTSS), and R327.

The protein belongs to the chorismate synthase family. Homotetramer. Requires FMNH2 as cofactor.

The catalysed reaction is 5-O-(1-carboxyvinyl)-3-phosphoshikimate = chorismate + phosphate. Its pathway is metabolic intermediate biosynthesis; chorismate biosynthesis; chorismate from D-erythrose 4-phosphate and phosphoenolpyruvate: step 7/7. In terms of biological role, catalyzes the anti-1,4-elimination of the C-3 phosphate and the C-6 proR hydrogen from 5-enolpyruvylshikimate-3-phosphate (EPSP) to yield chorismate, which is the branch point compound that serves as the starting substrate for the three terminal pathways of aromatic amino acid biosynthesis. This reaction introduces a second double bond into the aromatic ring system. This chain is Chorismate synthase, found in Actinobacillus succinogenes (strain ATCC 55618 / DSM 22257 / CCUG 43843 / 130Z).